A 114-amino-acid chain; its full sequence is Flagellar hook-basal body complex protein FliE (114 aa).

The protein belongs to the FliE family.

The protein localises to the bacterial flagellum basal body. This is Flagellar hook-basal body complex protein FliE from Burkholderia multivorans (strain ATCC 17616 / 249).